Consider the following 453-residue polypeptide: MAKKKATFICQECGYQSPKYLGRCPNCSAWSSFVEEVEVKEVKNARVSLAGEKSRPVKLKDVDNISYHRTQTDMSEFNRVLGGGVVPGSLILIGGDPGIGKSTLLLQVSTQLANKGTVLYVSGEESAEQIKLRSERLGDIDNEFYLYAETNMQAIRTEIENIKPDFLIIDSIQTIMSPDITGVQGSVSQVREVTAELMQLAKTNNIATFIVGHVTKEGTLAGPRMLEHMVDTVLYFEGERHHTFRILRAVKNRFGSTNEIGIFEMQSGGLVEVLNPSQVFLEERLDGATGSAVVVTMEGSRPILAEVQSLVTPTVFGNARRTTTGLDFNRVSLIMAVLEKRCGLLLQNQDAYLKSAGGVKLDEPAIDLAVAVAIASSYKEKPTSPQEAFLGEIGLTGEIRRVTRIEQRINEAAKLGFTKVYAPKNALQGIDIPQGIEVVGVTTVGQVLKAVFS.

A C4-type zinc finger spans residues 10–27 (CQECGYQSPKYLGRCPNC). Residue 95 to 102 (GDPGIGKS) participates in ATP binding. A RadA KNRFG motif motif is present at residues 251-255 (KNRFG). The lon-protease-like stretch occupies residues 350–453 (DAYLKSAGGV…VGQVLKAVFS (104 aa)).

It belongs to the RecA family. RadA subfamily.

DNA-dependent ATPase involved in processing of recombination intermediates, plays a role in repairing DNA breaks. Stimulates the branch migration of RecA-mediated strand transfer reactions, allowing the 3' invading strand to extend heteroduplex DNA faster. Binds ssDNA in the presence of ADP but not other nucleotides, has ATPase activity that is stimulated by ssDNA and various branched DNA structures, but inhibited by SSB. Does not have RecA's homology-searching function. The chain is DNA repair protein RadA from Streptococcus pyogenes serotype M6 (strain ATCC BAA-946 / MGAS10394).